The chain runs to 289 residues: Urease accessory protein UreD (289 aa).

It belongs to the UreD family. As to quaternary structure, ureD, UreF and UreG form a complex that acts as a GTP-hydrolysis-dependent molecular chaperone, activating the urease apoprotein by helping to assemble the nickel containing metallocenter of UreC. The UreE protein probably delivers the nickel.

The protein resides in the cytoplasm. Functionally, required for maturation of urease via the functional incorporation of the urease nickel metallocenter. The chain is Urease accessory protein UreD from Xanthobacter autotrophicus (strain ATCC BAA-1158 / Py2).